The primary structure comprises 312 residues: Small ribosomal subunit protein uS2 (312 aa).

The protein belongs to the universal ribosomal protein uS2 family. Component of the small ribosomal subunit. Mature ribosomes consist of a small (40S) and a large (60S) subunit. The 40S subunit contains about 33 different proteins and 1 molecule of RNA (18S). The 60S subunit contains about 49 different proteins and 3 molecules of RNA (25S, 5.8S and 5S). Interacts with ribosomal protein S21.

It localises to the cytoplasm. Required for the assembly and/or stability of the 40S ribosomal subunit. Required for the processing of the 20S rRNA-precursor to mature 18S rRNA in a late step of the maturation of 40S ribosomal subunits. The chain is Small ribosomal subunit protein uS2 from Vitis vinifera (Grape).